The sequence spans 360 residues: tRNA-specific 2-thiouridylase MnmA (360 aa).

ATP-binding positions include 8 to 15 (GMSGGVDS) and Met34. The segment at 94–96 (NPD) is interaction with target base in tRNA. Cys99 functions as the Nucleophile in the catalytic mechanism. A disulfide bridge connects residues Cys99 and Cys195. Position 123 (Gly123) interacts with ATP. The interval 145-147 (KDQ) is interaction with tRNA. The active-site Cysteine persulfide intermediate is the Cys195. Positions 307-308 (RY) are interaction with tRNA.

It belongs to the MnmA/TRMU family.

It localises to the cytoplasm. The catalysed reaction is S-sulfanyl-L-cysteinyl-[protein] + uridine(34) in tRNA + AH2 + ATP = 2-thiouridine(34) in tRNA + L-cysteinyl-[protein] + A + AMP + diphosphate + H(+). Its function is as follows. Catalyzes the 2-thiolation of uridine at the wobble position (U34) of tRNA, leading to the formation of s(2)U34. The sequence is that of tRNA-specific 2-thiouridylase MnmA from Methylobacillus flagellatus (strain ATCC 51484 / DSM 6875 / VKM B-1610 / KT).